We begin with the raw amino-acid sequence, 397 residues long: Lysosomal acid lipase/cholesteryl ester hydrolase (397 aa).

The signal sequence occupies residues 1–25; the sequence is MQLLGRVICFVVGILLSGGPTGTIS. The propeptide at 26-72 is removed in mature form; the sequence is AVDPEANMNVTEIIMHWGYPEHSVQTGDGYILGVHRIPHGRKNQFDK. N-linked (GlcNAc...) asparagine glycans are attached at residues asparagine 34, asparagine 99, and asparagine 159. The region spanning 84–378 is the AB hydrolase-1 domain; that stretch reads HGFLADSSNW…EWDHLDFIWG (295 aa). Residue serine 172 is the Charge relay system of the active site. Asparagine 271 and asparagine 319 each carry an N-linked (GlcNAc...) asparagine glycan. The active-site Charge relay system is histidine 372.

It belongs to the AB hydrolase superfamily. Lipase family. As to quaternary structure, monomer. Glycosylation is not essential for catalytic activity.

It is found in the lysosome. It carries out the reaction a sterol ester + H2O = a sterol + a fatty acid + H(+). It catalyses the reaction cholesteryl (9Z-octadecenoate) + H2O = cholesterol + (9Z)-octadecenoate + H(+). The catalysed reaction is a triacylglycerol + H2O = a 1,2-diacylglycerol + a fatty acid + H(+). The enzyme catalyses 1,2-di-(9Z-octadecenoyl)-glycerol + (9Z)-octadecenoate + H(+) = 1,2,3-tri-(9Z-octadecenoyl)-glycerol + H2O. It carries out the reaction a 1,2-diacylglycerol + H2O = a 1-acylglycerol + a fatty acid + H(+). It catalyses the reaction 1,2-di-(9Z-octadecenoyl)-glycerol + H2O = 1-(9Z-octadecenoyl)-glycerol + (9Z)-octadecenoate + H(+). The catalysed reaction is a 1,3-diacylglycerol + H2O = a 1-acylglycerol + a fatty acid + H(+). The enzyme catalyses 1,3-di-(9Z-octadecenoyl)-glycerol + H2O = 1-(9Z-octadecenoyl)-glycerol + (9Z)-octadecenoate + H(+). Its function is as follows. Catalyzes the deacylation of cholesteryl ester core lipids of endocytosed low density lipoproteins to generate free fatty acids and cholesterol. Hydrolyzes triglycerides (1,2,3-triacylglycerol) and diglycerides (such as 1,2-diacylglycerol and 1,3-diacylglycerol) with preference for the acyl moieties at the sn-1 or sn-3 positions. The polypeptide is Lysosomal acid lipase/cholesteryl ester hydrolase (Lipa) (Rattus norvegicus (Rat)).